We begin with the raw amino-acid sequence, 617 residues long: Zinc metalloproteinase nas-36 (617 aa).

Residues M1–A22 form the signal peptide. The propeptide occupies D23–R126. The region spanning S127 to K322 is the Peptidase M12A domain. 9 disulfide bridges follow: C169/C321, C192/C211, C325/C346, C348/C357, C368/C397, C425/C445, C519/C550, C523/C555, and C535/C540. Residue N174 is glycosylated (N-linked (GlcNAc...) asparagine). H219 serves as a coordination point for Zn(2+). Residue E220 is part of the active site. Residues H223 and H229 each contribute to the Zn(2+) site. The region spanning N317–E358 is the EGF-like domain. One can recognise a CUB domain in the interval C368–T482. The TSP type-1 domain occupies P507 to P556.

Zn(2+) serves as cofactor. In terms of tissue distribution, expressed in hypodermal cells. Also detected in the hypodermal seam cells in L4 larvae and young adults. In old adult hermaphrodites, it localizes to the vulva (at protein level).

The protein resides in the secreted. Metalloprotease. Involved in molting, a process during larval stages in which a new cuticle is formed and the old cuticle is shed. This is Zinc metalloproteinase nas-36 (nas-36) from Caenorhabditis elegans.